The sequence spans 1097 residues: DNA-directed RNA polymerase subunit beta (1097 aa).

Belongs to the RNA polymerase beta chain family. As to quaternary structure, in plastids the minimal PEP RNA polymerase catalytic core is composed of four subunits: alpha, beta, beta', and beta''. When a (nuclear-encoded) sigma factor is associated with the core the holoenzyme is formed, which can initiate transcription.

Its subcellular location is the plastid. It localises to the chloroplast. The enzyme catalyses RNA(n) + a ribonucleoside 5'-triphosphate = RNA(n+1) + diphosphate. DNA-dependent RNA polymerase catalyzes the transcription of DNA into RNA using the four ribonucleoside triphosphates as substrates. The protein is DNA-directed RNA polymerase subunit beta of Rhodomonas salina (Cryptomonas salina).